We begin with the raw amino-acid sequence, 275 residues long: Large ribosomal subunit protein uL2 (275 aa).

Positions 35-49 (DSQSSTAGRNNNGRI) are enriched in polar residues. 2 disordered regions span residues 35–59 (DSQS…GGHK) and 224–275 (AMNP…RHKR). The segment covering 50–59 (TTRHKGGGHK) has biased composition (basic residues).

It belongs to the universal ribosomal protein uL2 family. Part of the 50S ribosomal subunit. Forms a bridge to the 30S subunit in the 70S ribosome.

In terms of biological role, one of the primary rRNA binding proteins. Required for association of the 30S and 50S subunits to form the 70S ribosome, for tRNA binding and peptide bond formation. It has been suggested to have peptidyltransferase activity; this is somewhat controversial. Makes several contacts with the 16S rRNA in the 70S ribosome. In Burkholderia cenocepacia (strain HI2424), this protein is Large ribosomal subunit protein uL2.